The following is a 573-amino-acid chain: NEDD4-binding protein 3-A (573 aa).

Disordered regions lie at residues 168–216 (LNTM…INSL) and 382–407 (LRGE…EDSK). Composition is skewed to polar residues over residues 184-196 (QPSN…QSES) and 207-216 (DSRQNSINSL). Residues 289–539 (VEDVARQLEE…KEIQSSYREM (251 aa)) adopt a coiled-coil conformation.

Belongs to the N4BP3 family.

The protein resides in the cytoplasmic vesicle. It localises to the cell projection. Its subcellular location is the axon. The protein localises to the dendrite. Its function is as follows. Plays a role in axon and dendrite arborization during cranial nerve development. Also important for neural crest migration and early development of other anterior structures including eye, brain and cranial cartilage. This Xenopus laevis (African clawed frog) protein is NEDD4-binding protein 3-A.